Consider the following 136-residue polypeptide: ATP synthase F(0) complex subunit C1, mitochondrial (136 aa).

The N-terminal 61 residues, 1–61, are a transit peptide targeting the mitochondrion; it reads MQTAGALFIS…REFQTSVVSR (61 aa). A helical membrane pass occupies residues 77–97; sequence VGVAGSGAGIGTVFGSLIIGY. Lys-104 is subject to N6,N6,N6-trimethyllysine. The chain crosses the membrane as a helical span at residues 112 to 132; that stretch reads ILGFALSEAMGLFCLMVAFLI.

It belongs to the ATPase C chain family. As to quaternary structure, homooctamer; the c-ring consists of eight c subunits forming a circle, and each subunit adopts a hairpin shape. Component of the ATP synthase complex composed at least of ATP5F1A/subunit alpha, ATP5F1B/subunit beta, ATP5MC1/subunit c (homooctomer), MT-ATP6/subunit a, MT-ATP8/subunit 8, ATP5ME/subunit e, ATP5MF/subunit f, ATP5MG/subunit g, ATP5MK/subunit k, ATP5MJ/subunit j, ATP5F1C/subunit gamma, ATP5F1D/subunit delta, ATP5F1E/subunit epsilon, ATP5PF/subunit F6, ATP5PB/subunit b, ATP5PD/subunit d, ATP5PO/subunit OSCP. ATP synthase complex consists of a soluble F(1) head domain (subunits alpha(3) and beta(3)) - the catalytic core - and a membrane F(0) domain - the membrane proton channel (subunits c, a, 8, e, f, g, k and j). These two domains are linked by a central stalk (subunits gamma, delta, and epsilon) rotating inside the F1 region and a stationary peripheral stalk (subunits F6, b, d, and OSCP). Interacts with TMEM70 (homooligomer form); this interaction facilitates the oligomer formation of subunit c/ATP5MC1 (c-ring) and the c-ring membrane insertion and also protects ATP5MC1 against intramitochondrial proteolysis. In terms of processing, trimethylated by ATPSCKMT at Lys-104. Methylation is required for proper incorporation of the C subunit into the ATP synthase complex and mitochondrial respiration.

It is found in the mitochondrion membrane. The enzyme catalyses H(+)(in) = H(+)(out). Its function is as follows. Subunit c, of the mitochondrial membrane ATP synthase complex (F(1)F(0) ATP synthase or Complex V) that produces ATP from ADP in the presence of a proton gradient across the membrane which is generated by electron transport complexes of the respiratory chain. ATP synthase complex consist of a soluble F(1) head domain - the catalytic core - and a membrane F(1) domain - the membrane proton channel. These two domains are linked by a central stalk rotating inside the F(1) region and a stationary peripheral stalk. During catalysis, ATP synthesis in the catalytic domain of F(1) is coupled via a rotary mechanism of the central stalk subunits to proton translocation. With the subunit a (MT-ATP6), forms the proton-conducting channel in the F(0) domain, that contains two crucial half-channels (inlet and outlet) that facilitate proton movement from the mitochondrial intermembrane space (IMS) into the matrix. Protons are taken up via the inlet half-channel and released through the outlet half-channel, following a Grotthuss mechanism. This is ATP synthase F(0) complex subunit C1, mitochondrial from Homo sapiens (Human).